The primary structure comprises 157 residues: SsrA-binding protein (157 aa).

The tract at residues 130-157 (HDKRQDMAKKDSQRRIQKELGQRQKGME) is disordered. A compositionally biased stretch (basic and acidic residues) spans 132–157 (KRQDMAKKDSQRRIQKELGQRQKGME).

The protein belongs to the SmpB family.

It is found in the cytoplasm. Its function is as follows. Required for rescue of stalled ribosomes mediated by trans-translation. Binds to transfer-messenger RNA (tmRNA), required for stable association of tmRNA with ribosomes. tmRNA and SmpB together mimic tRNA shape, replacing the anticodon stem-loop with SmpB. tmRNA is encoded by the ssrA gene; the 2 termini fold to resemble tRNA(Ala) and it encodes a 'tag peptide', a short internal open reading frame. During trans-translation Ala-aminoacylated tmRNA acts like a tRNA, entering the A-site of stalled ribosomes, displacing the stalled mRNA. The ribosome then switches to translate the ORF on the tmRNA; the nascent peptide is terminated with the 'tag peptide' encoded by the tmRNA and targeted for degradation. The ribosome is freed to recommence translation, which seems to be the essential function of trans-translation. This Alkaliphilus metalliredigens (strain QYMF) protein is SsrA-binding protein.